A 346-amino-acid polypeptide reads, in one-letter code: Short-chain dehydrogenase/reductase bet4 (346 aa).

The disordered stretch occupies residues 1–35 (MTPAKAPSHAKKPEAGSQPISSMWTQMFPPKPTYT). Residues valine 56, lysine 80, aspartate 105, and asparagine 132 each contribute to the NADP(+) site. Serine 191 functions as the Proton donor in the catalytic mechanism. Positions 222 and 226 each coordinate NADP(+). Catalysis depends on tyrosine 222, which acts as the Proton acceptor. Catalysis depends on lysine 226, which acts as the Lowers pKa of active site Tyr.

Belongs to the short-chain dehydrogenases/reductases (SDR) family.

It carries out the reaction dehydroprobetaenone I + AH2 = probetaenone I + A. It functions in the pathway mycotoxin biosynthesis. In terms of biological role, short-chain dehydrogenase/reductase; part of the gene cluster that mediates the biosynthesis of betaenones, phytotoxic polyketides involved in leaf spot disease in sugar beets. The first step of the pathway is the synthesis of dehydroprobetaenone I by the polyketide synthase bet1 and the enoyl reductase bet3 via condensation of one acetyl-CoA starter unit with 7 malonyl-CoA units and 5 methylations. The C-terminal reductase (R) domain of bet1 catalyzes the reductive release of the polyketide chain. Because bet1 lacks a designated enoylreductase (ER) domain, the required activity is provided the enoyl reductase bet3. The short-chain dehydrogenase/reductase bet4 then catalyzes reduction of dehydroprobetaenone I to probetaenone I. The cytochrome P450 monooxygenase bet2 catalyzes successive epoxidation, oxidation (resulting from epoxide opening) and hydroxylation to install a tertiary alcohol in the decaline ring to yield betaenone C from dehydroprobetaenone I and betaenone B from probetaenone I. The FAD-linked oxidoreductase (orf1) is probably responsible for the conversion of betaenone C to betaenone A via an intramolecular aldol reaction between C-1 and C-17 to form the bridged tricyclic system in betaenone A. The protein is Short-chain dehydrogenase/reductase bet4 of Neocamarosporium betae (Beet black rot fungus).